Consider the following 234-residue polypeptide: Phosphoribosylaminoimidazole-succinocarboxamide synthase (234 aa).

This sequence belongs to the SAICAR synthetase family.

It catalyses the reaction 5-amino-1-(5-phospho-D-ribosyl)imidazole-4-carboxylate + L-aspartate + ATP = (2S)-2-[5-amino-1-(5-phospho-beta-D-ribosyl)imidazole-4-carboxamido]succinate + ADP + phosphate + 2 H(+). Its pathway is purine metabolism; IMP biosynthesis via de novo pathway; 5-amino-1-(5-phospho-D-ribosyl)imidazole-4-carboxamide from 5-amino-1-(5-phospho-D-ribosyl)imidazole-4-carboxylate: step 1/2. In Streptococcus pyogenes serotype M3 (strain ATCC BAA-595 / MGAS315), this protein is Phosphoribosylaminoimidazole-succinocarboxamide synthase.